A 348-amino-acid polypeptide reads, in one-letter code: Photosystem II protein D1 (348 aa).

3 helical membrane-spanning segments follow: residues 33–50 (YIGW…LATV), 122–137 (HFIF…EWEF), and 146–160 (WIFV…ASCA). His-122 serves as a coordination point for chlorophyll a. Pheophytin a is bound at residue Trp-130. Asp-174 and Glu-193 together coordinate [CaMn4O5] cluster. Residues 201-222 (FHILGVAGVFGGSLFSAMHGSL) form a helical membrane-spanning segment. His-202 serves as a coordination point for chlorophyll a. A quinone-binding positions include His-219 and 268–269 (SF). A Fe cation-binding site is contributed by His-219. Residue His-276 coordinates Fe cation. Residues 278–292 (FLAAWPVIGIWFTAL) traverse the membrane as a helical segment. Residues His-336, Glu-337, Asp-346, and Ala-348 each contribute to the [CaMn4O5] cluster site.

The protein belongs to the reaction center PufL/M/PsbA/D family. As to quaternary structure, PSII is composed of 1 copy each of membrane proteins PsbA, PsbB, PsbC, PsbD, PsbE, PsbF, PsbH, PsbI, PsbJ, PsbK, PsbL, PsbM, PsbT, PsbX, PsbY, PsbZ, Psb30/Ycf12, at least 3 peripheral proteins of the oxygen-evolving complex and a large number of cofactors. It forms dimeric complexes. The D1/D2 heterodimer binds P680, chlorophylls that are the primary electron donor of PSII, and subsequent electron acceptors. It shares a non-heme iron and each subunit binds pheophytin, quinone, additional chlorophylls, carotenoids and lipids. D1 provides most of the ligands for the Mn4-Ca-O5 cluster of the oxygen-evolving complex (OEC). There is also a Cl(-1) ion associated with D1 and D2, which is required for oxygen evolution. The PSII complex binds additional chlorophylls, carotenoids and specific lipids. is required as a cofactor. Post-translationally, tyr-165 forms a radical intermediate that is referred to as redox-active TyrZ, YZ or Y-Z.

Its subcellular location is the plastid. It localises to the chloroplast thylakoid membrane. The catalysed reaction is 2 a plastoquinone + 4 hnu + 2 H2O = 2 a plastoquinol + O2. In terms of biological role, photosystem II (PSII) is a light-driven water:plastoquinone oxidoreductase that uses light energy to abstract electrons from H(2)O, generating O(2) and a proton gradient subsequently used for ATP formation. It consists of a core antenna complex that captures photons, and an electron transfer chain that converts photonic excitation into a charge separation. The D1/D2 (PsbA/PsbD) reaction center heterodimer binds P680, the primary electron donor of PSII as well as several subsequent electron acceptors. This Heterocapsa rotundata (Dinoflagellate) protein is Photosystem II protein D1.